The primary structure comprises 433 residues: Sulfhydrylase FUB7 (433 aa).

The residue at position 211 (K211) is an N6-(pyridoxal phosphate)lysine.

This sequence belongs to the trans-sulfuration enzymes family. The cofactor is pyridoxal 5'-phosphate.

The protein operates within mycotoxin biosynthesis. Functionally, sulfhydrylase; part of the gene cluster that mediates the biosynthesis of fusaric acid, a mycotoxin with low to moderate toxicity to animals and humans, but with high phytotoxic properties. L-aspartate is suggested as fusaric acid amino acid precursor that is activated and further processed to O-acetyl-L-homoserine by cluster enzymes aspartate kinase FUB3 and homoserine O-acetyltransferase FUB5, as well as enzymes of the primary metabolism. The polyketide synthase (PKS) FUB1 generates the triketide trans-2-hexenal which is presumptively released by the hydrolase FUB4 and linked to the NRPS-bound amino acid precursor by NAD(P)-dependent dehydrogenase FUB6. FUB1, FUB4, and the non-canonical NRPS Fub8 may form an enzyme complex. Further processing of the NRPS-bound intermediate might be carried out by FUB6 and the sulfhydrylase FUB7, enabling a spontaneous electrocyclization to close the carbon backbone of fusaric acid. Dihydrofusaric acid is likely to be released via reduction by the thioester reductase (TR) domain of FUB8 whereupon the final oxidation to fusaric acid may (also) be performed by the FMN-dependent dehydrogenase FUB9. This chain is Sulfhydrylase FUB7, found in Fusarium oxysporum f. sp. lycopersici (strain 4287 / CBS 123668 / FGSC 9935 / NRRL 34936) (Fusarium vascular wilt of tomato).